The primary structure comprises 520 residues: Chaperone Ric-8B (520 aa).

A Phosphoserine modification is found at serine 468. A Phosphothreonine modification is found at threonine 473.

The protein belongs to the synembryn family. Interacts with GDP-bound G(s) G-alpha proteins GNAL and GNAS. Does not interact with G-alpha proteins when they are in complex with subunits beta and gamma. In terms of tissue distribution, predominantly expressed in the mature olfactory sensory neurons and also in a few regions in the brain.

It is found in the cytoplasm. Its subcellular location is the cell cortex. In terms of biological role, chaperone that specifically binds and folds nascent G(s) G-alpha proteins (GNAS and GNAL) prior to G protein heterotrimer formation, promoting their association with the plasma membrane. Also acts as a guanine nucleotide exchange factor (GEF) for G(s) proteins by stimulating exchange of bound GDP for free GTP. Acts as an important component for odorant signal transduction by mediating GNAL (G(olf)-alpha) folding, thereby promoting-dependent cAMP accumulation in olfactory sensory neurons. The sequence is that of Chaperone Ric-8B from Mus musculus (Mouse).